The sequence spans 331 residues: 6-phosphogluconolactonase (331 aa).

An N6-acetyllysine modification is found at Lys-287.

The protein belongs to the cycloisomerase 2 family.

The catalysed reaction is 6-phospho-D-glucono-1,5-lactone + H2O = 6-phospho-D-gluconate + H(+). It participates in carbohydrate degradation; pentose phosphate pathway; D-ribulose 5-phosphate from D-glucose 6-phosphate (oxidative stage): step 2/3. Its function is as follows. Catalyzes the hydrolysis of 6-phosphogluconolactone to 6-phosphogluconate. This chain is 6-phosphogluconolactonase, found in Escherichia coli (strain SMS-3-5 / SECEC).